Reading from the N-terminus, the 311-residue chain is Protoheme IX farnesyltransferase (311 aa).

A run of 9 helical transmembrane segments spans residues 38–58 (IKVV…APDM), 62–82 (YFVQ…AAVI), 113–133 (LIFS…AANW), 134–154 (LTAQ…TMFL), 162–182 (IVIG…SETG), 188–208 (PWIL…ALAI), 230–250 (FTKT…FLPF), 251–271 (LIHM…IIFI), and 286–306 (ALNL…ALFA).

The protein belongs to the UbiA prenyltransferase family. Protoheme IX farnesyltransferase subfamily.

It is found in the cell inner membrane. The enzyme catalyses heme b + (2E,6E)-farnesyl diphosphate + H2O = Fe(II)-heme o + diphosphate. It functions in the pathway porphyrin-containing compound metabolism; heme O biosynthesis; heme O from protoheme: step 1/1. Functionally, converts heme B (protoheme IX) to heme O by substitution of the vinyl group on carbon 2 of heme B porphyrin ring with a hydroxyethyl farnesyl side group. This Psychromonas ingrahamii (strain DSM 17664 / CCUG 51855 / 37) protein is Protoheme IX farnesyltransferase.